Consider the following 260-residue polypeptide: Cytochrome c oxidase subunit 2 (260 aa).

The Mitochondrial intermembrane segment spans residues 1–43 (MILRSLSCRFLTIALCDAAEPWQLGFQDAATPMMQGIIDLHHD). A helical transmembrane segment spans residues 44–64 (IFFFLILILVFVLWMLVRALW). Over 65-84 (HFNEQTNPIPQRIVHGTTIE) the chain is Mitochondrial matrix. Residues 85–105 (IIWTIFPSVILLFIAIPSFAL) form a helical membrane-spanning segment. Over 106-260 (LYSMDGVLVD…VSNQLILQTN (155 aa)) the chain is Mitochondrial intermembrane. His189, Cys224, Glu226, Cys228, His232, and Met235 together coordinate Cu cation. Glu226 contributes to the Mg(2+) binding site.

This sequence belongs to the cytochrome c oxidase subunit 2 family. As to quaternary structure, component of the cytochrome c oxidase (complex IV, CIV), a multisubunit enzyme composed of a catalytic core of 3 subunits and several supernumerary subunits. The complex exists as a monomer or a dimer and forms supercomplexes (SCs) in the inner mitochondrial membrane with ubiquinol-cytochrome c oxidoreductase (cytochrome b-c1 complex, complex III, CIII). The cofactor is Cu cation.

The protein resides in the mitochondrion inner membrane. The enzyme catalyses 4 Fe(II)-[cytochrome c] + O2 + 8 H(+)(in) = 4 Fe(III)-[cytochrome c] + 2 H2O + 4 H(+)(out). Functionally, component of the cytochrome c oxidase, the last enzyme in the mitochondrial electron transport chain which drives oxidative phosphorylation. The respiratory chain contains 3 multisubunit complexes succinate dehydrogenase (complex II, CII), ubiquinol-cytochrome c oxidoreductase (cytochrome b-c1 complex, complex III, CIII) and cytochrome c oxidase (complex IV, CIV), that cooperate to transfer electrons derived from NADH and succinate to molecular oxygen, creating an electrochemical gradient over the inner membrane that drives transmembrane transport and the ATP synthase. Cytochrome c oxidase is the component of the respiratory chain that catalyzes the reduction of oxygen to water. Electrons originating from reduced cytochrome c in the intermembrane space (IMS) are transferred via the dinuclear copper A center (CU(A)) of subunit 2 and heme A of subunit 1 to the active site in subunit 1, a binuclear center (BNC) formed by heme A3 and copper B (CU(B)). The BNC reduces molecular oxygen to 2 water molecules using 4 electrons from cytochrome c in the IMS and 4 protons from the mitochondrial matrix. The sequence is that of Cytochrome c oxidase subunit 2 (COX2) from Triticum aestivum (Wheat).